The sequence spans 278 residues: ADP-dependent (S)-NAD(P)H-hydrate dehydratase (278 aa).

A YjeF C-terminal domain is found at 5–272 (TTEIVSRTII…TRIPTYMHRF (268 aa)). Positions 40, 103, and 152 each coordinate (6S)-NADPHX. Gly-214 serves as a coordination point for AMP. Asp-215 contributes to the (6S)-NADPHX binding site.

It belongs to the NnrD/CARKD family. In terms of assembly, homotetramer. Mg(2+) is required as a cofactor.

The enzyme catalyses (6S)-NADHX + ADP = AMP + phosphate + NADH + H(+). The catalysed reaction is (6S)-NADPHX + ADP = AMP + phosphate + NADPH + H(+). In terms of biological role, catalyzes the dehydration of the S-form of NAD(P)HX at the expense of ADP, which is converted to AMP. Together with NAD(P)HX epimerase, which catalyzes the epimerization of the S- and R-forms, the enzyme allows the repair of both epimers of NAD(P)HX, a damaged form of NAD(P)H that is a result of enzymatic or heat-dependent hydration. The chain is ADP-dependent (S)-NAD(P)H-hydrate dehydratase from Lactiplantibacillus plantarum (strain ATCC BAA-793 / NCIMB 8826 / WCFS1) (Lactobacillus plantarum).